Reading from the N-terminus, the 291-residue chain is 4-hydroxy-tetrahydrodipicolinate synthase (291 aa).

Threonine 45 lines the pyruvate pocket. The Proton donor/acceptor role is filled by tyrosine 133. Lysine 161 acts as the Schiff-base intermediate with substrate in catalysis. Residue isoleucine 203 coordinates pyruvate.

This sequence belongs to the DapA family. Homotetramer; dimer of dimers.

The protein resides in the cytoplasm. The enzyme catalyses L-aspartate 4-semialdehyde + pyruvate = (2S,4S)-4-hydroxy-2,3,4,5-tetrahydrodipicolinate + H2O + H(+). It participates in amino-acid biosynthesis; L-lysine biosynthesis via DAP pathway; (S)-tetrahydrodipicolinate from L-aspartate: step 3/4. Its function is as follows. Catalyzes the condensation of (S)-aspartate-beta-semialdehyde [(S)-ASA] and pyruvate to 4-hydroxy-tetrahydrodipicolinate (HTPA). This chain is 4-hydroxy-tetrahydrodipicolinate synthase, found in Neisseria meningitidis serogroup C (strain 053442).